Consider the following 306-residue polypeptide: Porphobilinogen deaminase (306 aa).

Cysteine 240 is subject to S-(dipyrrolylmethanemethyl)cysteine.

The protein belongs to the HMBS family. Monomer. Dipyrromethane is required as a cofactor.

It catalyses the reaction 4 porphobilinogen + H2O = hydroxymethylbilane + 4 NH4(+). It participates in porphyrin-containing compound metabolism; protoporphyrin-IX biosynthesis; coproporphyrinogen-III from 5-aminolevulinate: step 2/4. In terms of biological role, tetrapolymerization of the monopyrrole PBG into the hydroxymethylbilane pre-uroporphyrinogen in several discrete steps. The protein is Porphobilinogen deaminase of Thiobacillus denitrificans (strain ATCC 25259 / T1).